We begin with the raw amino-acid sequence, 695 residues long: Cysteine-rich receptor-like protein kinase 6 (695 aa).

The signal sequence occupies residues 1 to 31 (MRRHRPYLDGVAAAAATFLLAVLLHAPLAAG). At 32 to 294 (EDEPPPWVLC…ATSGEKTKNR (263 aa)) the chain is on the extracellular side. 2 consecutive Gnk2-homologous domains span residues 38–142 (WVLC…NRDF) and 151–261 (TTYT…VFPF). Residues N49, N53, N70, and N101 are each glycosylated (N-linked (GlcNAc...) asparagine). Intrachain disulfides connect C96/C105 and C108/C133. N178 carries N-linked (GlcNAc...) asparagine glycosylation. 2 disulfide bridges follow: C215/C224 and C227/C252. A helical membrane pass occupies residues 295–315 (IGTVLAIVMPAIAAILLMVVA). The Cytoplasmic segment spans residues 316–695 (CFCCWKRIKK…DLSITELVPR (380 aa)). The Protein kinase domain maps to 363–634 (FADTKMIGQG…PTISSVNIML (272 aa)). Residues 369-377 (IGQGGFGMV) and K391 contribute to the ATP site. D488 (proton acceptor) is an active-site residue. The disordered stretch occupies residues 658–682 (DSSNPYSERYPRPRHSGYSDNSTVV).

The protein belongs to the protein kinase superfamily. Ser/Thr protein kinase family. CRK subfamily.

Its subcellular location is the membrane. Its function is as follows. Involved in disease resistance. Required for NPR1/NH1-mediated immunity to the bacterial blight pathogen Xanthomomas oryzae pv. oryzae (Xoo). Required for the benzothiadiazole (BTH)-induced immune response. Possesses kinase activity in vitro. The polypeptide is Cysteine-rich receptor-like protein kinase 6 (Oryza sativa subsp. japonica (Rice)).